The chain runs to 450 residues: MGALFGTDGVRGLANEELSPELAFKLGRAGAFVLQEETGARALVIGRDTRLSGDMLEAALVAGICSVGVDVIRVGVLPTPAIAYLSRAPEAGGGVVISASHNPYEDNGIKFFGANGYKLPDRLEDRIEHLVLTAGGALPTPSGIGVGRVREMPDAMERYVRFACGTGPSDLAGLKIVVDCANGAAYQVAPQVLGRLGASVVPLFDTPDGTNINAGCGSTHPHVLQQAVPAEGADLGLAFDGDADRLIAVDEHGRLVDGDHLLVICGRHMRRHGRLAGNTMVVTVMSNLGLHLALREAGIRVLQTKVGDRYVLEEMLRSGCCLGGEQSGHIIFTEYNTTGDGIITALQLLKVMRETGRPLSQLAAQMERLPQLLENVRVRDRNAVMSSPALWEAIARYEHGLNGEGRILVRPSGTEPLVRVMAEARNETLLTKVVEELVRVVTEIDRQQAG.

Residue Ser100 is the Phosphoserine intermediate of the active site. Ser100, Asp240, Asp242, and Asp244 together coordinate Mg(2+). Ser100 bears the Phosphoserine mark.

It belongs to the phosphohexose mutase family. The cofactor is Mg(2+). In terms of processing, activated by phosphorylation.

It carries out the reaction alpha-D-glucosamine 1-phosphate = D-glucosamine 6-phosphate. In terms of biological role, catalyzes the conversion of glucosamine-6-phosphate to glucosamine-1-phosphate. The polypeptide is Phosphoglucosamine mutase (Desulforudis audaxviator (strain MP104C)).